Reading from the N-terminus, the 200-residue chain is dITP/XTP pyrophosphatase (200 aa).

Residue threonine 8–lysine 13 participates in substrate binding. Aspartate 72 (proton acceptor) is an active-site residue. Residue aspartate 72 participates in Mg(2+) binding. Residues serine 73, phenylalanine 155–aspartate 158, lysine 178, and histidine 183–arginine 184 each bind substrate.

Belongs to the HAM1 NTPase family. In terms of assembly, homodimer. Mg(2+) serves as cofactor.

The catalysed reaction is XTP + H2O = XMP + diphosphate + H(+). It catalyses the reaction dITP + H2O = dIMP + diphosphate + H(+). The enzyme catalyses ITP + H2O = IMP + diphosphate + H(+). Its function is as follows. Pyrophosphatase that catalyzes the hydrolysis of nucleoside triphosphates to their monophosphate derivatives, with a high preference for the non-canonical purine nucleotides XTP (xanthosine triphosphate), dITP (deoxyinosine triphosphate) and ITP. Seems to function as a house-cleaning enzyme that removes non-canonical purine nucleotides from the nucleotide pool, thus preventing their incorporation into DNA/RNA and avoiding chromosomal lesions. The sequence is that of dITP/XTP pyrophosphatase from Streptomyces avermitilis (strain ATCC 31267 / DSM 46492 / JCM 5070 / NBRC 14893 / NCIMB 12804 / NRRL 8165 / MA-4680).